The following is a 362-amino-acid chain: Cytochrome c oxidase subunit 2 (362 aa).

The N-terminal stretch at 1–28 (MEQQEKRGTVRKALLGSVIGFGGLALAG) is a signal peptide. Cys29 is lipidated: N-palmitoyl cysteine. Cys29 carries the S-diacylglycerol cysteine lipid modification. The next 2 membrane-spanning stretches (helical) occupy residues 60-80 (FWVW…GLFI) and 107-127 (IPLE…LFFF). The disordered stretch occupies residues 171–206 (SDYVGTDEKRQEAAEKTKFDQGGDNPNPINGRSKTD). Basic and acidic residues predominate over residues 176 to 191 (TDEKRQEAAEKTKFDQ). Over residues 197 to 206 (NPINGRSKTD) the composition is skewed to polar residues. Cu cation contacts are provided by His246, Cys287, Glu289, Cys291, His295, and Met298. The disordered stretch occupies residues 325–362 (NSDALKSIGEAPYATSTHPFNSERATRDGANFDDTAAA).

It belongs to the cytochrome c oxidase subunit 2 family. As to quaternary structure, associates with subunits I, III and IV to form cytochrome c oxidase. It depends on binuclear copper center (CuA) as a cofactor.

It localises to the cell membrane. It catalyses the reaction 4 Fe(II)-[cytochrome c] + O2 + 8 H(+)(in) = 4 Fe(III)-[cytochrome c] + 2 H2O + 4 H(+)(out). Functionally, subunits I and II form the functional core of the enzyme complex. Electrons originating in cytochrome c are transferred via heme a and Cu(A) to the binuclear center formed by heme a3 and Cu(B). The polypeptide is Cytochrome c oxidase subunit 2 (ctaC) (Corynebacterium diphtheriae (strain ATCC 700971 / NCTC 13129 / Biotype gravis)).